Reading from the N-terminus, the 317-residue chain is Single myb histone 6 (317 aa).

The HTH myb-type domain occupies 1 to 61; it reads MGAPKQRWTS…KWRNMNVIVS (61 aa). The H-T-H motif DNA-binding region spans 28–57; the sequence is WRTILKDPEFSSTLCYRSNVDLKDKWRNMN. The H15 domain maps to 121–189; that stretch reads KSHRLDNIIM…KVNRKYRIAP (69 aa). A coiled-coil region spans residues 244–288; that stretch reads VAAARAVAEAEAIMAEAEAAAKEAEAAEAEAQAAQAFAEAAFLTL.

It belongs to the histone H1/H5 family. SMH subfamily. Forms a homodimer and heterodimers.

The protein resides in the nucleus. The protein localises to the chromosome. It is found in the nucleolus. It localises to the telomere. Its function is as follows. Binds preferentially double-stranded telomeric repeats, but may also bind to the single telomeric strand. The polypeptide is Single myb histone 6 (SMH6) (Zea mays (Maize)).